Here is a 208-residue protein sequence, read N- to C-terminus: Large ribosomal subunit protein uL3 (208 aa).

The residue at position 149 (glutamine 149) is an N5-methylglutamine.

The protein belongs to the universal ribosomal protein uL3 family. As to quaternary structure, part of the 50S ribosomal subunit. Forms a cluster with proteins L14 and L19. Post-translationally, methylated by PrmB.

Its function is as follows. One of the primary rRNA binding proteins, it binds directly near the 3'-end of the 23S rRNA, where it nucleates assembly of the 50S subunit. In Haemophilus influenzae (strain PittGG), this protein is Large ribosomal subunit protein uL3.